The primary structure comprises 139 residues: D-ribose pyranase (139 aa).

Catalysis depends on His20, which acts as the Proton donor. Substrate is bound by residues Asp28, His106, and 128–130; that span reads YAN.

This sequence belongs to the RbsD / FucU family. RbsD subfamily. Homodecamer.

The protein localises to the cytoplasm. It catalyses the reaction beta-D-ribopyranose = beta-D-ribofuranose. The protein operates within carbohydrate metabolism; D-ribose degradation; D-ribose 5-phosphate from beta-D-ribopyranose: step 1/2. Catalyzes the interconversion of beta-pyran and beta-furan forms of D-ribose. The protein is D-ribose pyranase of Vibrio cholerae serotype O1 (strain ATCC 39541 / Classical Ogawa 395 / O395).